The primary structure comprises 127 residues: Protein ApaG (127 aa).

Residues 3–127 (KDKRYAFSVK…FQLNMPRVLH (125 aa)) form the ApaG domain.

The protein is Protein ApaG of Methylobacillus flagellatus (strain ATCC 51484 / DSM 6875 / VKM B-1610 / KT).